Here is a 494-residue protein sequence, read N- to C-terminus: Neuronal pentraxin receptor (494 aa).

The Cytoplasmic segment spans residues 1–2; sequence MK. The helical; Signal-anchor for type II membrane protein transmembrane segment at 3–23 threads the bilayer; sequence FLAVLLAAGMLAFLGAVICII. Topologically, residues 24–494 are extracellular; that stretch reads ASVPLAASPA…FDVCKRRAKA (471 aa). The interval 37-80 is disordered; the sequence is PGGTDNASAASAAGAPGPQRSLSALQGAGGSAGPSVLPGEPAAS. An N-linked (GlcNAc...) asparagine glycan is attached at Asn42. Composition is skewed to low complexity over residues 43–62 and 69–80; these read ASAA…SALQ and GPSVLPGEPAAS. N-linked (GlcNAc...) asparagine glycosylation occurs at Asn211. The region spanning 286 to 488 is the Pentraxin (PTX) domain; it reads DAFKVSIPIR…GAKKAAFDVC (203 aa). Cysteines 316 and 377 form a disulfide. Residues Asn341, Glu419, Gln420, Asp421, and Gln431 each contribute to the Ca(2+) site. An N-linked (GlcNAc...) asparagine glycan is attached at Asn457.

Interacts with KLHL2. Heteropentamer with NPTX1 and/or NPTX2. Also binds taipoxin-associated calcium-binding protein 49 (TCBP49/RCN2). Ca(2+) is required as a cofactor. N-glycosylated. In terms of processing, ubiquitinated by a cullin-RING-based BCR (BTB-CUL3-RBX1) E3 ubiquitin-protein ligase complex containing KLHL2. In terms of tissue distribution, brain specific.

The protein localises to the membrane. Functionally, may be involved in mediating uptake of synaptic material during synapse remodeling or in mediating the synaptic clustering of AMPA glutamate receptors at a subset of excitatory synapses. The sequence is that of Neuronal pentraxin receptor (Nptxr) from Rattus norvegicus (Rat).